A 553-amino-acid polypeptide reads, in one-letter code: Putative transport protein YidE (553 aa).

5 helical membrane-spanning segments follow: residues 4–24 (IALTVSILALVAVVGLFIGNV), 28–48 (GIGLGIGGVLFGGIIVGHFVS), 65–85 (FGLILFVYTIGIQVGPGFFAS), 95–115 (LFAVLIVIIGGLVTAILHKLF), and 158–178 (MSYAMAYPFGICGILFTMWML). 2 RCK C-terminal domains span residues 191 to 276 (QQHE…VIGQ) and 279 to 361 (DTSL…VLGN). Helical transmembrane passes span 371–391 (MLPVFIGIGLGVLLGSIPVFV), 393–413 (GFPAALKLGLAGGPLIMALIL), 439–459 (IVLFLSVVGLKSGGDFVNTLV), 464–484 (LSWIGYGALITAVPLITVGIL), 493–513 (YLTMCGMLAGSMTDPPALAFA), and 533–553 (LVMFLRIITPQLLAVLFWSIG).

It belongs to the AAE transporter (TC 2.A.81) family. YidE subfamily.

The protein resides in the cell membrane. The chain is Putative transport protein YidE from Escherichia coli O7:K1 (strain IAI39 / ExPEC).